Consider the following 170-residue polypeptide: Cathelicidin antimicrobial peptide (170 aa).

Residues 1–30 form the signal peptide; the sequence is MKTQRDGPSLGRWSLLLLLLGLTMPLAVIG. A propeptide spans 31–131 (cathelin-like domain (CLD)); the sequence is RVLSYQEAVL…DISCDKDKRK (101 aa). Residues 31-131 are cathelin-like domain (CLD); that stretch reads RVLSYQEAVL…DISCDKDKRK (101 aa). Cystine bridges form between cysteine 86/cysteine 97 and cysteine 108/cysteine 125. An active core region spans residues 150-162; the sequence is LKKIGQKIKDFFG.

Belongs to the cathelicidin family. In terms of assembly, monomer, homodimer or homotrimer (in vitro). Oligomerizes as tetra- or hexamer in solution (in vitro). Post-translationally, proteolytically cleaved by proteinase PRTN3 into antibacterial peptide LL-37. Proteolytically cleaved by cathepsin CTSG and neutrophil elastase ELANE. Resistant to proteolytic degradation in solution, and when bound to both zwitterionic (mimicking mammalian membranes) and negatively charged membranes (mimicking bacterial membranes). In terms of processing, after secretion onto the skin surface, the CAMP gene product is processed by a serine protease-dependent mechanism into multiple novel antimicrobial peptides distinct from and shorter than cathelicidin LL-37. These peptides show enhanced antimicrobial action, acquiring the ability to kill skin pathogens such as S.aureus, E.coli and C.albicans. These peptides have lost the ability to stimulate CXCL8/IL8 release from keratinocytes. The peptides act synergistically, killing bacteria at lower concentrations when present together, and maintain activity at increased salt condition.

Its subcellular location is the secreted. It is found in the vesicle. Antimicrobial protein that is an integral component of the innate immune system. Binds to bacterial lipopolysaccharides (LPS). Acts via neutrophil N-formyl peptide receptors to enhance the release of CXCL2. Postsecretory processing generates multiple cathelicidin antimicrobial peptides with various lengths which act as a topical antimicrobial defense in sweat on skin. The unprocessed precursor form, cathelicidin antimicrobial peptide, inhibits the growth of Gram-negative E.coli and E.aerogenes with efficiencies comparable to that of the mature peptide LL-37 (in vitro). In terms of biological role, antimicrobial peptide that is an integral component of the innate immune system. Binds to bacterial lipopolysaccharides (LPS). Causes membrane permeabilization by forming transmembrane pores (in vitro). Causes lysis of E.coli. Exhibits antimicrobial activity against Gram-negative bacteria such as P.aeruginosa, S.typhimurium, E.aerogenes, E.coli and P.syringae, Gram-positive bacteria such as L.monocytogenes, S.epidermidis, S.pyogenes and S.aureus, as well as vancomycin-resistant enterococci (in vitro). Exhibits antimicrobial activity against methicillin-resistant S.aureus, P.mirabilis, and C.albicans in low-salt media, but not in media containing 100 mM NaCl (in vitro). Forms chiral supramolecular assemblies with quinolone signal (PQS) molecules of P.aeruginosa, which may lead to interference of bacterial quorum signaling and perturbance of bacterial biofilm formation. May form supramolecular fiber-like assemblies on bacterial membranes. Induces cytokine and chemokine producation as well as TNF/TNFA and CSF2/GMCSF production in normal human keratinocytes. Exhibits hemolytic activity against red blood cells. Functionally, exhibits antimicrobial activity against E.coli and B.megaterium (in vitro). This is Cathelicidin antimicrobial peptide from Saguinus oedipus (Cotton-top tamarin).